The primary structure comprises 1483 residues: ABC multidrug transporter atrA (1483 aa).

The span at 1-19 shows a compositional bias: basic and acidic residues; that stretch reads MASHKKSEDPLVVKDRQEQ. The interval 1–92 is disordered; sequence MASHKKSEDP…NDPAVDPQGP (92 aa). Residue asparagine 32 is glycosylated (N-linked (GlcNAc...) asparagine). The span at 71–82 shows a compositional bias: polar residues; that stretch reads PTRTSTLATISE. Asparagine 123 and asparagine 322 each carry an N-linked (GlcNAc...) asparagine glycan. The region spanning 147-398 is the ABC transporter 1 domain; the sequence is FRIGEMMKNR…FERQGWECPQ (252 aa). A run of 5 helical transmembrane segments spans residues 512–532, 539–559, 595–615, 620–640, and 654–674; these read TVST…VFYG, GFTA…LIAM, IPVK…LAGL, GQFF…SAVF, and MGLA…VLPV. Asparagine 718 carries N-linked (GlcNAc...) asparagine glycosylation. The helical transmembrane segment at 759–779 threads the bilayer; the sequence is FGILIAFLVGFMMIYFIATEL. Asparagine 780 carries N-linked (GlcNAc...) asparagine glycosylation. Residues 840 to 1083 form the ABC transporter 2 domain; sequence FTWRDVCYDI…LLNYFESNGA (244 aa). 876-883 is an ATP binding site; the sequence is GVSGAGKT. Asparagine 947 and asparagine 1146 each carry an N-linked (GlcNAc...) asparagine glycan. The next 5 membrane-spanning stretches (helical) occupy residues 1179–1199, 1215–1235, 1254–1274, 1293–1313, and 1320–1340; these read YIAS…FSFF, LFML…LFVT, AFLI…GILT, LVLL…HMAI, and ETAS…CGVM. Asparagine 1413 is a glycosylation site (N-linked (GlcNAc...) asparagine). The chain crosses the membrane as a helical span at residues 1444–1464; the sequence is FGLMWVYIVFNIFLATMLYYT. Residue asparagine 1471 is glycosylated (N-linked (GlcNAc...) asparagine).

Belongs to the ABC transporter superfamily. ABCG family. PDR (TC 3.A.1.205) subfamily.

The protein localises to the cell membrane. It carries out the reaction (R)-miconazole(in) + ATP + H2O = (R)-miconazole(out) + ADP + phosphate + H(+). Functionally, pleiotropic ABC efflux transporter involved in the basal level of azole susceptibility. Confers resistance to miconazole and clotrimazole. The chain is ABC multidrug transporter atrA from Aspergillus oryzae (strain ATCC 42149 / RIB 40) (Yellow koji mold).